A 377-amino-acid polypeptide reads, in one-letter code: Bradyzoite pseudokinase 1 (377 aa).

The first 26 residues, 1-26, serve as a signal peptide directing secretion; that stretch reads MANTSVRRRQLLSSVLLLQWLTTVLG. The interval 39–58 is disordered; sequence HGQFPSLRRTEGVSQSGSGH. Residues 48-354 enclose the Protein kinase domain; that stretch reads TEGVSQSGSG…IEEIMKDPLF (307 aa).

The protein belongs to the protein kinase superfamily. STE Ser/Thr protein kinase family. WNG subfamily. In terms of assembly, forms a complex composed of BPK1, MCP4, MAG1, GRA8 and GRA9. Interacts with MCP4. Interacts with MAG1. Interacts with GRA8. Interacts with GRA9.

It is found in the secreted. Its function is as follows. Required for the growth, maintenance, and/or stability, and thus infectivity, of bradyzoite cysts. The chain is Bradyzoite pseudokinase 1 from Toxoplasma gondii.